We begin with the raw amino-acid sequence, 79 residues long: Sulfur carrier protein TusA (79 aa).

Cys17 (cysteine persulfide intermediate) is an active-site residue.

The protein belongs to the sulfur carrier protein TusA family.

The protein localises to the cytoplasm. In terms of biological role, sulfur carrier protein which probably makes part of a sulfur-relay system. This Actinobacillus succinogenes (strain ATCC 55618 / DSM 22257 / CCUG 43843 / 130Z) protein is Sulfur carrier protein TusA.